Reading from the N-terminus, the 364-residue chain is Phosphoserine aminotransferase (364 aa).

Arg-41 contributes to the L-glutamate binding site. Pyridoxal 5'-phosphate is bound by residues 75-76 (AS), Trp-100, Thr-155, and Gln-198. Residue Lys-199 is modified to N6-(pyridoxal phosphate)lysine. A pyridoxal 5'-phosphate-binding site is contributed by 239–240 (NT).

It belongs to the class-V pyridoxal-phosphate-dependent aminotransferase family. SerC subfamily. As to quaternary structure, homodimer. Requires pyridoxal 5'-phosphate as cofactor.

Its subcellular location is the cytoplasm. The enzyme catalyses O-phospho-L-serine + 2-oxoglutarate = 3-phosphooxypyruvate + L-glutamate. It carries out the reaction 4-(phosphooxy)-L-threonine + 2-oxoglutarate = (R)-3-hydroxy-2-oxo-4-phosphooxybutanoate + L-glutamate. It participates in amino-acid biosynthesis; L-serine biosynthesis; L-serine from 3-phospho-D-glycerate: step 2/3. In terms of biological role, catalyzes the reversible conversion of 3-phosphohydroxypyruvate to phosphoserine and of 3-hydroxy-2-oxo-4-phosphonooxybutanoate to phosphohydroxythreonine. In Streptococcus thermophilus (strain ATCC BAA-250 / LMG 18311), this protein is Phosphoserine aminotransferase.